The primary structure comprises 936 residues: Intimin (936 aa).

The N-terminal stretch at 1–41 (MIIHGFCTGTRHKHKLRKTFIMLGAGLGLFFSVNQNSFANG) is a signal peptide. Positions 63 to 112 (LFYTLKTGESVAQLSKSQGISVPVIWSLNKHLYSSESEMMKASPGQQIIL) constitute a LysM domain. Big-1 domains are found at residues 557–650 (ITNF…VIFV) and 657–748 (ITEI…VEFF). The BIG2 domain maps to 780–831 (KLQATGGNGKYTWKSSNTKIASVDNSGVITLNEKGSATITVVSGDNQSATYT). A disulfide bond links C857 and C934.

It belongs to the intimin/invasin family.

Its subcellular location is the cell outer membrane. Functionally, an inverse autotransporter. This Citrobacter freundii protein is Intimin (eae).